We begin with the raw amino-acid sequence, 194 residues long: Orotate phosphoribosyltransferase (194 aa).

5-phospho-alpha-D-ribose 1-diphosphate is bound at residue 117–125 (EDIVSTGLS). Orotate-binding residues include serine 121 and arginine 149.

It belongs to the purine/pyrimidine phosphoribosyltransferase family. PyrE subfamily. Homodimer. Requires Mg(2+) as cofactor.

It catalyses the reaction orotidine 5'-phosphate + diphosphate = orotate + 5-phospho-alpha-D-ribose 1-diphosphate. Its pathway is pyrimidine metabolism; UMP biosynthesis via de novo pathway; UMP from orotate: step 1/2. Functionally, catalyzes the transfer of a ribosyl phosphate group from 5-phosphoribose 1-diphosphate to orotate, leading to the formation of orotidine monophosphate (OMP). The protein is Orotate phosphoribosyltransferase of Maricaulis maris (strain MCS10) (Caulobacter maris).